Consider the following 493-residue polypeptide: Glutamate--tRNA ligase (493 aa).

The 'HIGH' region signature appears at 10–20 (PSPTGTPHVGL). The short motif at 254–258 (KLSKR) is the 'KMSKS' region element. Residue lysine 257 coordinates ATP.

Belongs to the class-I aminoacyl-tRNA synthetase family. Glutamate--tRNA ligase type 1 subfamily. In terms of assembly, monomer.

Its subcellular location is the cytoplasm. It carries out the reaction tRNA(Glu) + L-glutamate + ATP = L-glutamyl-tRNA(Glu) + AMP + diphosphate. Functionally, catalyzes the attachment of glutamate to tRNA(Glu) in a two-step reaction: glutamate is first activated by ATP to form Glu-AMP and then transferred to the acceptor end of tRNA(Glu). In Corynebacterium glutamicum (strain ATCC 13032 / DSM 20300 / JCM 1318 / BCRC 11384 / CCUG 27702 / LMG 3730 / NBRC 12168 / NCIMB 10025 / NRRL B-2784 / 534), this protein is Glutamate--tRNA ligase.